The sequence spans 176 residues: Peptide deformylase (176 aa).

Fe cation is bound by residues C95 and H137. E138 is a catalytic residue. Position 141 (H141) interacts with Fe cation.

The protein belongs to the polypeptide deformylase family. It depends on Fe(2+) as a cofactor.

It catalyses the reaction N-terminal N-formyl-L-methionyl-[peptide] + H2O = N-terminal L-methionyl-[peptide] + formate. Its function is as follows. Removes the formyl group from the N-terminal Met of newly synthesized proteins. Requires at least a dipeptide for an efficient rate of reaction. N-terminal L-methionine is a prerequisite for activity but the enzyme has broad specificity at other positions. This is Peptide deformylase from Hyphomonas neptunium (strain ATCC 15444).